A 363-amino-acid chain; its full sequence is MVQRMTFDAASYTAQLQDKVTRLRDLLAPFDAPEPQVFDSPLQNFRLRAEFRLWREGGERHYAMFSQDDKRTPILIEEFPIASLRINQLMPQLKAAWQASAALSHKLFQVEFLTTLAGDAMITLCYHRPLDEHWHTAANKLAADLNVSIIGRSKGKRDVIGRDYVVEKLDVGGRTFSYRQPEGAFTQPNGTVNQKMLNWAFEALGDRSDDLLELYCGNGNFTLPLATRVRKVLATEISKTSVNAALSNLDENAVDNVTLVRLSAEELTEALNEVRPFRRLHGIDLKSYEFGSVFVDPPRAGMDPDTCELTRRFENILYISCNPETLAANIAQLHDTHRITQCAMFDQFPWTHHMESGVLLTRR.

S-adenosyl-L-methionine contacts are provided by glutamine 187, tyrosine 215, asparagine 220, glutamate 236, and aspartate 296. Residue cysteine 321 is the Nucleophile of the active site. Glutamate 355 (proton acceptor) is an active-site residue.

It belongs to the class I-like SAM-binding methyltransferase superfamily. RNA M5U methyltransferase family. TrmA subfamily.

It catalyses the reaction uridine(54) in tRNA + S-adenosyl-L-methionine = 5-methyluridine(54) in tRNA + S-adenosyl-L-homocysteine + H(+). The catalysed reaction is uridine(341) in tmRNA + S-adenosyl-L-methionine = 5-methyluridine(341) in tmRNA + S-adenosyl-L-homocysteine + H(+). In terms of biological role, dual-specificity methyltransferase that catalyzes the formation of 5-methyluridine at position 54 (m5U54) in all tRNAs, and that of position 341 (m5U341) in tmRNA (transfer-mRNA). This Pseudomonas fluorescens protein is tRNA/tmRNA (uracil-C(5))-methyltransferase.